Reading from the N-terminus, the 540-residue chain is Chaperonin GroEL 2 (540 aa).

ATP contacts are provided by residues 29–32, 86–90, G413, 476–478, and D492; these read TLGP, DGTTT, and NAA.

This sequence belongs to the chaperonin (HSP60) family. As to quaternary structure, forms a cylinder of 14 subunits composed of two heptameric rings stacked back-to-back. Interacts with the co-chaperonin GroES.

It localises to the cytoplasm. It carries out the reaction ATP + H2O + a folded polypeptide = ADP + phosphate + an unfolded polypeptide.. Functionally, together with its co-chaperonin GroES, plays an essential role in assisting protein folding. The GroEL-GroES system forms a nano-cage that allows encapsulation of the non-native substrate proteins and provides a physical environment optimized to promote and accelerate protein folding. The protein is Chaperonin GroEL 2 of Streptomyces albus G.